Consider the following 216-residue polypeptide: Uracil phosphoribosyltransferase (216 aa).

GTP contacts are provided by residues R32, R41, 75–78 (MGKI), and K77. At S82 the chain carries Phosphoserine. R85 contacts 5-phospho-alpha-D-ribose 1-diphosphate. R102 contributes to the GTP binding site. R110 provides a ligand contact to 5-phospho-alpha-D-ribose 1-diphosphate. R131 provides a ligand contact to GTP. Residues D137 and 137-145 (DPMLATGGS) each bind 5-phospho-alpha-D-ribose 1-diphosphate. Y201 serves as a coordination point for D-ribose 5-phosphate. Uracil-binding positions include L202 and 207–209 (GDF). Position 208 (D208) interacts with 5-phospho-alpha-D-ribose 1-diphosphate.

The protein belongs to the UPRTase family. It depends on Mg(2+) as a cofactor.

The enzyme catalyses UMP + diphosphate = 5-phospho-alpha-D-ribose 1-diphosphate + uracil. The protein operates within pyrimidine metabolism; UMP biosynthesis via salvage pathway; UMP from uracil: step 1/1. Its activity is regulated as follows. Allosterically activated by GTP. In terms of biological role, catalyzes the conversion of uracil and 5-phospho-alpha-D-ribose 1-diphosphate (PRPP) to UMP and diphosphate in the pyrimidine salvage pathway. This is Uracil phosphoribosyltransferase (FUR1) from Saccharomyces cerevisiae (strain ATCC 204508 / S288c) (Baker's yeast).